Here is a 462-residue protein sequence, read N- to C-terminus: uncharacterized protein (462 aa).

2 helical membrane passes run 381–401 (WILGSMILFTILASILRFKGM) and 433–453 (LWILEPIIRVTSLILLGNLYI).

The protein resides in the cell membrane. This is an uncharacterized protein from Methanocaldococcus jannaschii (strain ATCC 43067 / DSM 2661 / JAL-1 / JCM 10045 / NBRC 100440) (Methanococcus jannaschii).